A 357-amino-acid polypeptide reads, in one-letter code: Protein ATP1B4 (357 aa).

Residues methionine 1–serine 110 lie on the Nuclear side of the membrane. The segment at tyrosine 15–asparagine 80 is disordered. Positions glutamate 52–glycine 73 are enriched in acidic residues. A helical; Signal-anchor for type II membrane protein membrane pass occupies residues leucine 111–methionine 131. Topologically, residues tyrosine 132–threonine 357 are perinuclear space.

The protein belongs to the X(+)/potassium ATPases subunit beta family. Associates with a SMAD7-transcriptional complex. Interacts with SNW1 and TOR1AIP1. According to PubMed:17592128, does not associate with known Na,K-ATPase alpha-subunits. As to expression, highly expressed in skeletal muscle and at a lower level in heart.

The protein resides in the nucleus inner membrane. Its function is as follows. May act as a transcriptional coregulator during muscle development through its interaction with SNW1. Has lost its ancestral function as a Na,K-ATPase beta-subunit. The chain is Protein ATP1B4 (ATP1B4) from Homo sapiens (Human).